We begin with the raw amino-acid sequence, 127 residues long: Modulator protein MzrA (127 aa).

Residues 1 to 10 (MGLQNMTLRR) are Cytoplasmic-facing. The chain crosses the membrane as a helical span at residues 11–31 (FTLSMSALLLLCALLWLWAAL). Residues 32–127 (EQQESSLAIR…RLRDAPHRLG (96 aa)) lie on the Periplasmic side of the membrane.

It belongs to the MzrA family. In terms of assembly, interacts with EnvZ.

It localises to the cell inner membrane. Modulates the activity of the EnvZ/OmpR two-component regulatory system, probably by directly modulating EnvZ enzymatic activity and increasing stability of phosphorylated OmpR. This Enterobacter lignolyticus (strain SCF1) protein is Modulator protein MzrA.